The primary structure comprises 162 residues: UPF0114 protein PFLU_5318 (162 aa).

The next 3 helical transmembrane spans lie at Leu-15–Phe-35, Leu-53–Val-73, and Leu-136–Leu-156.

This sequence belongs to the UPF0114 family.

The protein resides in the cell membrane. The sequence is that of UPF0114 protein PFLU_5318 from Pseudomonas fluorescens (strain SBW25).